A 259-amino-acid chain; its full sequence is Borneol dehydrogenase, mitochondrial (259 aa).

Residues 1–30 constitute a mitochondrion transit peptide; the sequence is MASTVLRRLEGKVALITGAASGIGESAARL. NAD(+) is bound by residues 21-23, aspartate 42, 63-64, and 90-92; these read SGI, DV, and NAG. Catalysis depends on serine 144, which acts as the Proton donor. Substrate contacts are provided by serine 144 and tyrosine 157. Tyrosine 157, lysine 161, and threonine 192 together coordinate NAD(+). The Proton acceptor role is filled by tyrosine 157. Catalysis depends on lysine 161, which acts as the Proton donor/acceptor.

It belongs to the short-chain dehydrogenases/reductases (SDR) family. As to expression, specifically expressed in glandular trichomes of mature flowers.

Its subcellular location is the mitochondrion. The enzyme catalyses borneol + NAD(+) = camphor + NADH + H(+). Its pathway is secondary metabolite biosynthesis; terpenoid biosynthesis. Involved in the biosynthesis of monoterpenes natural products related to camphor. Catalyzes the conversion of borneol into camphor. This Lavandula x intermedia (Lavandin) protein is Borneol dehydrogenase, mitochondrial.